The chain runs to 327 residues: Ribose-phosphate pyrophosphokinase (327 aa).

Residues 46 to 48 and 105 to 106 each bind ATP; these read NGE and RQ. Positions 139 and 179 each coordinate Mg(2+). Lysine 203 is an active-site residue. Residues arginine 205, aspartate 231, and 235–239 each bind D-ribose 5-phosphate; that span reads DTGGT.

Belongs to the ribose-phosphate pyrophosphokinase family. Class I subfamily. Homohexamer. Mg(2+) is required as a cofactor.

It localises to the cytoplasm. It carries out the reaction D-ribose 5-phosphate + ATP = 5-phospho-alpha-D-ribose 1-diphosphate + AMP + H(+). It functions in the pathway metabolic intermediate biosynthesis; 5-phospho-alpha-D-ribose 1-diphosphate biosynthesis; 5-phospho-alpha-D-ribose 1-diphosphate from D-ribose 5-phosphate (route I): step 1/1. Involved in the biosynthesis of the central metabolite phospho-alpha-D-ribosyl-1-pyrophosphate (PRPP) via the transfer of pyrophosphoryl group from ATP to 1-hydroxyl of ribose-5-phosphate (Rib-5-P). The chain is Ribose-phosphate pyrophosphokinase from Mycobacterium leprae (strain TN).